We begin with the raw amino-acid sequence, 273 residues long: Phycobilisome 32.1 kDa linker polypeptide, phycocyanin-associated, rod 2 (273 aa).

Residues 1–180 enclose the PBS-linker domain; the sequence is MTSLVSAQRL…VYRGYATSDR (180 aa). A CpcD-like domain is found at 220-273; that stretch reads NQMYRLQVIQGAAPGRGTRVRRGKAEYLVSYDNLSAKLQQINRQGDTVTMISLA.

Belongs to the phycobilisome linker protein family. In terms of assembly, part of 2 PBS rod complexes, the conventional CpcG-PBS rod and a photosystem I-specific CpcL-PBS rod, both of which include ferredoxin--NADP reductase (petH). CpcG-PBS has on average 3 stacked phycocyanin hexamers (PC, CpcA and CpcB). Linker CpcG connects the PC stack to the thylakoid, the hexamers are linked by 1 copy of CpcC1, 1 copy of CpcC2 and the stack is terminated by a single copy of CpcD. The CpcL-PBS has on average 5 stacked phycocyanin hexamers (PC, CpcA and CpcB). Linker CpcL connects the PC stack to the thylakoid, the hexamers are linked by 1 copy of CpcC1, 3 copies of CpcC2 and the stack is terminated by a single copy of CpcD. Interacts with the C-phycocyanin (PC) beta subunit (cpcB), it may fit into the center of the PC hexamer.

It is found in the cellular thylakoid membrane. Functionally, rod linker protein, associated with phycocyanin. Linker polypeptides determine the state of aggregation and the location of the disk-shaped phycobiliprotein units within the phycobilisome and modulate their spectroscopic properties in order to mediate a directed and optimal energy transfer. The chain is Phycobilisome 32.1 kDa linker polypeptide, phycocyanin-associated, rod 2 (cpcC2) from Synechocystis sp. (strain ATCC 27184 / PCC 6803 / Kazusa).